Reading from the N-terminus, the 352-residue chain is MDYQVSSPTYDIDYYTSEPCQKVNVKQIAARLLPPLYSLVFIFGFVGNILVVLILINCKRLKSMTDIYLLNLAISDLFFLLTVPFWAHYAAAQWDFGNTMCQLLTGLYFIGFFSGIFFIILLTIDRYLAIVHAVFALKARTVTFGVVTSVITWVVAVFASLPGIIFTRSQREGLHYTCSSHFPYSQYQFWKNFQTLKIVILGLVLPLLVMVICYSGILKTLLRCRNEKKRHRAVRLIFTIMIVYFLFWAPYNIVLLLNTFQEFFGLNNCSSSNRLDQAMQVTETLGMTHCCINPIIYAFVGEKFRNYLLVFFQKHIAKRFCKCCRIFQQEAPERASSVYTRSTGEQEISVGL.

At 1-30 (MDYQVSSPTYDIDYYTSEPCQKVNVKQIAA) the chain is on the extracellular side. Residue Tyr-3 is modified to Sulfotyrosine. O-linked (GalNAc...) serine glycosylation is found at Ser-6 and Ser-7. A sulfotyrosine mark is found at Tyr-10, Tyr-14, and Tyr-15. Disulfide bonds link Cys-20–Cys-269 and Cys-101–Cys-178. A helical membrane pass occupies residues 31–58 (RLLPPLYSLVFIFGFVGNILVVLILINC). Residues 59-68 (KRLKSMTDIY) lie on the Cytoplasmic side of the membrane. A helical membrane pass occupies residues 69–89 (LLNLAISDLFFLLTVPFWAHY). The Extracellular portion of the chain corresponds to 90–102 (AAAQWDFGNTMCQ). A helical transmembrane segment spans residues 103 to 124 (LLTGLYFIGFFSGIFFIILLTI). Residues 125–141 (DRYLAIVHAVFALKART) lie on the Cytoplasmic side of the membrane. Residues 142-166 (VTFGVVTSVITWVVAVFASLPGIIF) traverse the membrane as a helical segment. Over 167 to 198 (TRSQREGLHYTCSSHFPYSQYQFWKNFQTLKI) the chain is Extracellular. Residues 199-218 (VILGLVLPLLVMVICYSGIL) form a helical membrane-spanning segment. The Cytoplasmic segment spans residues 219 to 235 (KTLLRCRNEKKRHRAVR). The chain crosses the membrane as a helical span at residues 236–260 (LIFTIMIVYFLFWAPYNIVLLLNTF). Over 261–277 (QEFFGLNNCSSSNRLDQ) the chain is Extracellular. Residues 278–301 (AMQVTETLGMTHCCINPIIYAFVG) traverse the membrane as a helical segment. Over 302-352 (EKFRNYLLVFFQKHIAKRFCKCCRIFQQEAPERASSVYTRSTGEQEISVGL) the chain is Cytoplasmic. S-palmitoyl cysteine attachment occurs at residues Cys-321, Cys-323, and Cys-324. Residues Ser-336, Ser-337, Ser-342, and Ser-349 each carry the phosphoserine; by BARK1 modification.

Belongs to the G-protein coupled receptor 1 family. Interacts with PRAF2. Efficient ligand binding to CCL3/MIP-1alpha and CCL4/MIP-1beta requires sulfation, O-glycosylation and sialic acid modifications. Glycosylation on Ser-6 is required for efficient binding of CCL4. Interacts with GRK2. Interacts with ARRB1 and ARRB2. Interacts with CNIH4. Interacts with S100A4; this interaction stimulates T-lymphocyte chemotaxis. Sulfated on at least 2 of the N-terminal tyrosines. Sulfation is required for efficient binding of the chemokines, CCL3 and CCL4. In terms of processing, palmitoylation in the C-terminal is important for cell surface expression. Post-translationally, phosphorylation on serine residues in the C-terminal is stimulated by binding CC chemokines especially by APO-RANTES. O-glycosylated, but not N-glycosylated. Ser-6 appears to be the major site even if Ser-7 may be also O-glycosylated. Also sialylated glycans present which contribute to chemokine binding. Thr-16 and Ser-17 may also be glycosylated and, if so, with small moieties such as a T-antigen.

The protein resides in the cell membrane. Functionally, receptor for a number of inflammatory CC-chemokines including CCL3/MIP-1-alpha, CCL4/MIP-1-beta and RANTES and subsequently transduces a signal by increasing the intracellular calcium ion level. May play a role in the control of granulocytic lineage proliferation or differentiation. Participates in T-lymphocyte migration to the infection site by acting as a chemotactic receptor. The polypeptide is C-C chemokine receptor type 5 (CCR5) (Colobus polykomos (Western black-and-white colobus monkey)).